A 356-amino-acid polypeptide reads, in one-letter code: MDTQGPVSQPFQQPEKPGRVRRRKTRRERNKALVGSRRPLAHHDPPVAIRDPPVVPTASKLVVITQGRLSREHRGLFNHEVKSLDVARLLSSGTLVPGSPTLPAKPSPSPGRAQEPAPRSRDKENQVPGGSGPGPPSSPELSGVGQLLAELQCQLSLPQAFPRRNLIQDARDAIVHTLQACHGCVPDLALVLRGCQPPLPGAKPGVSERKMTPFWINSPDQVPEQERQRKQQGTKEFTFPMPYTSSMPTAHRGSLAPPRGPWPPYFPSLSSPSGTAWGPPTAFDLLKSIWLVATPPPPRPWGVGLPQPLPQPSSPLLPRTSVLDWSPSPPSPLPSLSWVVAQSSPEAWSFPPMRLY.

The segment covering 1 to 12 (MDTQGPVSQPFQ) has biased composition (polar residues). Disordered stretches follow at residues 1-53 (MDTQ…RDPP), 95-143 (LVPG…ELSG), 216-255 (INSP…RGSL), and 312-331 (PSSP…SPPS). Positions 19–29 (RVRRRKTRRER) are enriched in basic residues.

In terms of assembly, interacts with CNTD1.

The protein resides in the nucleus. Its subcellular location is the chromosome. Functionally, promotes meiotic crossing over formation through its interaction with CNTD1 by participating in the crossover differentiation step of crossover-specific recombination intermediates. The protein is Proline-rich protein 19 of Homo sapiens (Human).